Reading from the N-terminus, the 243-residue chain is Pyridoxine 5'-phosphate synthase (243 aa).

Asparagine 9 is a 3-amino-2-oxopropyl phosphate binding site. 1-deoxy-D-xylulose 5-phosphate is bound at residue 11-12 (DH). Arginine 20 lines the 3-amino-2-oxopropyl phosphate pocket. Histidine 45 acts as the Proton acceptor in catalysis. 2 residues coordinate 1-deoxy-D-xylulose 5-phosphate: arginine 47 and histidine 52. The active-site Proton acceptor is glutamate 72. Threonine 102 is a binding site for 1-deoxy-D-xylulose 5-phosphate. Catalysis depends on histidine 193, which acts as the Proton donor. 3-amino-2-oxopropyl phosphate is bound by residues glycine 194 and 215 to 216 (GH).

The protein belongs to the PNP synthase family. In terms of assembly, homooctamer; tetramer of dimers.

The protein resides in the cytoplasm. It carries out the reaction 3-amino-2-oxopropyl phosphate + 1-deoxy-D-xylulose 5-phosphate = pyridoxine 5'-phosphate + phosphate + 2 H2O + H(+). It participates in cofactor biosynthesis; pyridoxine 5'-phosphate biosynthesis; pyridoxine 5'-phosphate from D-erythrose 4-phosphate: step 5/5. Its function is as follows. Catalyzes the complicated ring closure reaction between the two acyclic compounds 1-deoxy-D-xylulose-5-phosphate (DXP) and 3-amino-2-oxopropyl phosphate (1-amino-acetone-3-phosphate or AAP) to form pyridoxine 5'-phosphate (PNP) and inorganic phosphate. In Yersinia pestis, this protein is Pyridoxine 5'-phosphate synthase.